The following is a 585-amino-acid chain: Glutamate decarboxylase 2 (585 aa).

Residues 1-24 (MASPGSGFWSFGSEDGSADPENPG) form a disordered region. Phosphoserine is present on residues S3, S6, S10, and S13. Residues C30 and C45 are each lipidated (S-palmitoyl cysteine). 181 to 183 (QLS) provides a ligand contact to substrate. At K396 the chain carries N6-(pyridoxal phosphate)lysine. R558 contributes to the substrate binding site.

It belongs to the group II decarboxylase family. Homodimer. Pyridoxal 5'-phosphate serves as cofactor. In terms of processing, phosphorylated; which does not affect kinetic parameters or subcellular location. Palmitoylated; which is required for presynaptic clustering.

Its subcellular location is the cytoplasm. It is found in the cytosol. The protein localises to the cytoplasmic vesicle. The protein resides in the presynaptic cell membrane. It localises to the golgi apparatus membrane. It carries out the reaction L-glutamate + H(+) = 4-aminobutanoate + CO2. Functionally, catalyzes the production of GABA. This Mus musculus (Mouse) protein is Glutamate decarboxylase 2 (Gad2).